Here is a 122-residue protein sequence, read N- to C-terminus: Large ribosomal subunit protein bL19c (122 aa).

This sequence belongs to the bacterial ribosomal protein bL19 family.

The protein resides in the plastid. The protein localises to the chloroplast. The protein is Large ribosomal subunit protein bL19c of Gracilaria tenuistipitata var. liui (Red alga).